The primary structure comprises 70 residues: Protein SlyX homolog (70 aa).

The protein belongs to the SlyX family.

The polypeptide is Protein SlyX homolog (Shewanella woodyi (strain ATCC 51908 / MS32)).